We begin with the raw amino-acid sequence, 505 residues long: Trans-cinnamate 4-monooxygenase (505 aa).

A helical transmembrane segment spans residues 3 to 23; that stretch reads LLLLEKTLLGSFVAVLVAILV. (E)-cinnamate-binding positions include 213–218 and A306; that span reads RSRLAQ. Residue C447 coordinates heme.

Belongs to the cytochrome P450 family. It depends on heme as a cofactor.

The protein resides in the membrane. The catalysed reaction is (E)-cinnamate + reduced [NADPH--hemoprotein reductase] + O2 = (E)-4-coumarate + oxidized [NADPH--hemoprotein reductase] + H2O + H(+). The protein operates within phenylpropanoid metabolism; trans-4-coumarate biosynthesis; trans-4-coumarate from trans-cinnamate: step 1/1. Catalyzes the first oxidative step of the phenylpropanoid pathway in higher plants by transforming trans-cinnamate into p-coumarate. The compounds formed by this pathway are essential components for lignification, pollination, and defense against ultraviolet light, predators and pathogens. The sequence is that of Trans-cinnamate 4-monooxygenase (CYP73A16) from Populus kitakamiensis (Aspen).